A 202-amino-acid chain; its full sequence is MFITFEGIDGSGKTTQSRLLTEYLSGVYGVDNVILTREPGGTFFNESVRNLLFSTKNLDKLSELLFFIAMRREHFMKVIKPALTQQKIVICDRFIDSTIAYQGYGHGIDCKLIEELNDLVVDIYPNITFVLDSDINQSVARSNKNGYEFLDLEFYARVRDGFRDIVKRNQYRCYLITNVDATKNINEISAIYLKTIKILHAL.

7–14 (GIDGSGKT) lines the ATP pocket.

It belongs to the thymidylate kinase family.

It carries out the reaction dTMP + ATP = dTDP + ADP. In terms of biological role, phosphorylation of dTMP to form dTDP in both de novo and salvage pathways of dTTP synthesis. The protein is Thymidylate kinase of Ehrlichia ruminantium (strain Gardel).